The following is a 488-amino-acid chain: UDP-N-acetylmuramate--L-alanine ligase (488 aa).

127 to 133 (GTHGKTT) lines the ATP pocket.

It belongs to the MurCDEF family.

Its subcellular location is the cytoplasm. The enzyme catalyses UDP-N-acetyl-alpha-D-muramate + L-alanine + ATP = UDP-N-acetyl-alpha-D-muramoyl-L-alanine + ADP + phosphate + H(+). The protein operates within cell wall biogenesis; peptidoglycan biosynthesis. Cell wall formation. This Shewanella sp. (strain MR-4) protein is UDP-N-acetylmuramate--L-alanine ligase.